Consider the following 344-residue polypeptide: Trace amine-associated receptor 8b (344 aa).

The Extracellular portion of the chain corresponds to 1 to 31; the sequence is MTSNFSQPALQLCYENTNGSCIKTPYSPGPR. 2 N-linked (GlcNAc...) asparagine glycosylation sites follow: Asn4 and Asn18. Cystine bridges form between Cys21–Cys185 and Cys104–Cys189. A helical membrane pass occupies residues 32 to 52; the sequence is VILYMVFGFGAVLAVCGNLLV. Residues 53–67 lie on the Cytoplasmic side of the membrane; it reads VISVLHFKQLHSPAN. Residues 68-88 traverse the membrane as a helical segment; sequence FLIASLASADFLVGISVMPFS. Topologically, residues 89 to 111 are extracellular; sequence MVRSIESCWYFGDAFCSLHSCCD. Residues 112–132 traverse the membrane as a helical segment; that stretch reads VAFCYSSALHLCFISVDRYIA. Topologically, residues 133–146 are cytoplasmic; the sequence is VTDPLVYPTKFTVS. Residues 147–167 form a helical membrane-spanning segment; the sequence is VSGICISISWILPLVYSSAVF. Residues 168-195 lie on the Extracellular side of the membrane; it reads YTGISAKGIESLVSALNCVGGCQIVVNQ. A helical membrane pass occupies residues 196–216; sequence DWVLIDFLLFFIPTLVMIILY. Over 217–260 the chain is Cytoplasmic; the sequence is SKIFLVAKQQAVKIETSVSDNRGESSSESHKARVAKRERKAAKT. The chain crosses the membrane as a helical span at residues 261-281; the sequence is LGVTVVAFMVSWLPYTIDSLV. Asp282 is a topological domain (extracellular). Residues 283 to 303 form a helical membrane-spanning segment; the sequence is AFVGFITPAYVYEICCWSAYY. At 304 to 344 the chain is on the cytoplasmic side; it reads NSAMNPLIYAFFYPWFRKAIKLILSGEILKSHSSTMSLFSE.

The protein belongs to the G-protein coupled receptor 1 family. Specifically expressed in neurons of the olfactory epithelium.

The protein resides in the cell membrane. Olfactory receptor specific for trace amines. Trace amine compounds are enriched in animal body fluids and act on trace amine-associated receptors (TAARs) to elicit both intraspecific and interspecific innate behaviors. Ligand-binding causes a conformation change that triggers signaling via G alpha proteins, possibly G(i)/G(o) G alpha proteins. This chain is Trace amine-associated receptor 8b, found in Mus musculus (Mouse).